The sequence spans 416 residues: LysM domain-containing GPI-anchored protein 1 (416 aa).

The N-terminal stretch at 1–27 is a signal peptide; that stretch reads MKIPEKPIFLIFVSLILASSLTFTATA. 4 disulfide bridges follow: C34/C100, C40/C163, C98/C161, and C100/C163. N-linked (GlcNAc...) asparagine glycosylation is present at N37. The region spanning 110–157 is the LysM 1 domain; that stretch reads THYKTRPSDNLGSIADSVYGGLVSAEQIQEANSVNDPSLLDVGTSLVI. An N-linked (GlcNAc...) asparagine glycan is attached at N165. One can recognise a LysM 2 domain in the interval 176-219; it reads LSYVVKEIDTLVGIARRYSTTITDLMNVNAMGAPDVSSGDILAV. 2 disulfide bridges follow: C224/C256 and C251/C279. A glycan (N-linked (GlcNAc...) asparagine) is linked at N241. N288, N299, and N310 each carry an N-linked (GlcNAc...) asparagine glycan. The interval 356–376 is disordered; that stretch reads DGPGSIASSPRSSMLPGGGIL. A391 is lipidated: GPI-anchor amidated alanine. A propeptide spans 392 to 416 (removed in mature form); it reads SASSVSYFFITFLISIASFSLALSS.

As to quaternary structure, interacts with peptidoglycans.

It localises to the cell membrane. It is found in the secreted. Required as a cell surface receptor for peptidoglycan (PGN) elicitor signaling leading to innate immunity. Plays an essential role in detecting PGNs and restricting bacterial growth (of Pseudomonas syringae pv. tomato DC3000 for example). The polypeptide is LysM domain-containing GPI-anchored protein 1 (LYM1) (Arabidopsis thaliana (Mouse-ear cress)).